A 790-amino-acid chain; its full sequence is SH3 domain-containing protein 19 (790 aa).

Disordered regions lie at residues 21–196 and 241–374; these read EGQT…PVLQ and EPIK…MDLQ. The residue at position 65 (serine 65) is a Phosphoserine. The segment covering 287–296 has biased composition (polar residues); it reads NTFSTVSGKL. The segment covering 336–351 has biased composition (pro residues); sequence QQPPTKVPPERPPPPK. Residues 342–358 form an interaction with SH3GL1 region; sequence VPPERPPPPKLSATRRS. Residues 365-374 are compositionally biased toward polar residues; the sequence is NRSSSDMDLQ. Serine 369 carries the post-translational modification Phosphoserine. SH3 domains lie at 415–477, 495–554, 571–630, 661–720, and 730–789; these read LSVP…PLDE, SGAP…VIID, VKGS…PVED, LPAE…PCPA, and PKGR…FLQI. Serine 762 carries the post-translational modification Phosphoserine.

Interacts with ADAM12. Isoform 4 and isoform 5 (but not isoform 1 and isoform 2) interact with ADAM9, ADAM10, ADAM15 and ADAM17. Interacts with SH3GL1 SH3 domain. Interacts via SH3 3 and SH3 4 or SH3 4 and SH3 5 domains with SOS2. Probably forms a trimeric complex with SH3GL1 and SOS2. Interacts with SH3YL1. As to expression, widely expressed with highest levels in heart, skeletal muscle, kidney, liver, placenta, small intestine and lung. Expressed at low levels in colon, thymus, spleen and leukocytes.

Its subcellular location is the cytoplasm. The protein localises to the nucleus. May play a role in regulating A disintegrin and metalloproteases (ADAMs) in the signaling of EGFR-ligand shedding. May be involved in suppression of Ras-induced cellular transformation and Ras-mediated activation of ELK1. Plays a role in the regulation of cell morphology and cytoskeletal organization. This chain is SH3 domain-containing protein 19 (SH3D19), found in Homo sapiens (Human).